A 587-amino-acid polypeptide reads, in one-letter code: Glucosylglycerate phosphorylase (587 aa).

Catalysis depends on Asp236, which acts as the Nucleophile.

Belongs to the glycosyl hydrolase 13 family. Glucosylglycerate phosphorylase subfamily.

It catalyses the reaction (2R)-2-O-(alpha-D-glucopyranosyl)-glycerate + phosphate = (R)-glycerate + alpha-D-glucose 1-phosphate. In terms of biological role, catalyzes the reversible phosphorolysis of glucosylglycerate into alpha-D-glucose 1-phosphate (Glc1P) and D-glycerate. May be a regulator of intracellular levels of glucosylglycerate, a compatible solute that primarily protects organisms facing salt stress and very specific nutritional constraints. Cannot catalyze the phosphorolysis of sucrose. The protein is Glucosylglycerate phosphorylase of Spirochaeta thermophila (strain ATCC 700085 / DSM 6578 / Z-1203).